Reading from the N-terminus, the 319-residue chain is Ribonucleoside-diphosphate reductase 2 subunit beta (319 aa).

Positions 67, 98, and 101 each coordinate Fe cation. Residue tyrosine 105 is part of the active site. Positions 158, 192, and 195 each coordinate Fe cation.

The protein belongs to the ribonucleoside diphosphate reductase small chain family. As to quaternary structure, tetramer of two alpha and two beta subunits. Fe cation is required as a cofactor.

The enzyme catalyses a 2'-deoxyribonucleoside 5'-diphosphate + [thioredoxin]-disulfide + H2O = a ribonucleoside 5'-diphosphate + [thioredoxin]-dithiol. Provides the precursors necessary for DNA synthesis. Catalyzes the biosynthesis of deoxyribonucleotides from the corresponding ribonucleotides. R2F contains the tyrosyl radical required for catalysis. This Escherichia coli (strain K12) protein is Ribonucleoside-diphosphate reductase 2 subunit beta (nrdF).